The chain runs to 1163 residues: E3 ubiquitin-protein ligase TRIM33 (1163 aa).

Residues 1-119 (MEVEASGTED…ASTSSSSSTP (119 aa)) form a disordered region. Residues 27–38 (TETKEAADEAKS) show a composition bias toward basic and acidic residues. Residues 45–54 (TPTTSSDSSS) show a composition bias toward low complexity. Positions 72–87 (DPPPPPPPPPPPPPST) are enriched in pro residues. The segment covering 88–99 (PADSTAAAASPA) has biased composition (low complexity). The RING-type zinc finger occupies 129–188 (CAVCKQSLQNRDCEPKLLPCLHSFCLKCIPQPDRKITMPVQGPHGQDTRIVNVMRCTVCH). The B box-type 1; atypical zinc finger occupies 215–268 (NSTQVCTSCEDNASAIGFCVECGEWLCKTCIEAHQRVKFTKDHKIRKKEEVSPE). The Zn(2+) site is built by C220, C223, C244, H257, C280, H283, C303, and H308. Residues 275–316 (QRPVFCPVHKQEALKLFCETCDTLTCRDCQLLEHKEHRYQFL) form a B box-type 2 zinc finger. Residues 345–369 (ASEVQKRLKEVAETHKKVEHEIKIA) are a coiled coil. Residues 524–533 (MQQAAIAQKH) show a composition bias toward low complexity. Disordered stretches follow at residues 524 to 555 (MQQA…QQQQ), 575 to 599 (QIQQ…QMIQ), 656 to 706 (LQRQ…VITP), 753 to 848 (TVGP…PLPI), and 867 to 918 (NVKS…KEDD). Residues 534–548 (QQQHQHHQQQQHQHQ) are compositionally biased toward basic residues. Positions 580–590 (MRIASQMSQHP) are enriched in polar residues. Composition is skewed to low complexity over residues 678–691 (SAAN…ASMA) and 753–797 (TVGP…SGTT). A compositionally biased stretch (basic and acidic residues) spans 821-830 (KTERTKDGRR). Residues 870–889 (SEPQSDNLSSCTNPNSRATL) are compositionally biased toward polar residues. A PHD-type zinc finger spans residues 921–968 (EDWCAVCQNGGELLCCDHCPKVFHITCHIPTLKSSPSGDWMCTFCRNL). In terms of domain architecture, Bromo spans 991–1114 (AMSPEEQRRC…LYFEERLLEI (124 aa)). The interval 1128–1147 (TQIEAEKEDSDDSDDDIIQP) is disordered. Positions 1133 to 1144 (EKEDSDDSDDDI) are enriched in acidic residues.

It is found in the nucleus. The enzyme catalyses S-ubiquitinyl-[E2 ubiquitin-conjugating enzyme]-L-cysteine + [acceptor protein]-L-lysine = [E2 ubiquitin-conjugating enzyme]-L-cysteine + N(6)-ubiquitinyl-[acceptor protein]-L-lysine.. Its pathway is protein modification; protein ubiquitination. May act as an E3 ubiquitin-protein ligase and a transcriptional repressor. Involved in the regulation of embryonic and adult hematopoiesis. Required for normal development and survival of both committed erythroid progenitor cells and posterior mesenchymal cells. The chain is E3 ubiquitin-protein ligase TRIM33 (trim33) from Danio rerio (Zebrafish).